The sequence spans 100 residues: A-type ATP synthase subunit F (100 aa).

This sequence belongs to the V-ATPase F subunit family. In terms of assembly, has multiple subunits with at least A(3), B(3), C, D, E, F, H, I and proteolipid K(x).

It is found in the cell membrane. Functionally, component of the A-type ATP synthase that produces ATP from ADP in the presence of a proton gradient across the membrane. The chain is A-type ATP synthase subunit F from Methanospirillum hungatei JF-1 (strain ATCC 27890 / DSM 864 / NBRC 100397 / JF-1).